The following is a 90-amino-acid chain: Co-chaperonin GroES (90 aa).

The protein belongs to the GroES chaperonin family. In terms of assembly, heptamer of 7 subunits arranged in a ring. Interacts with the chaperonin GroEL.

It is found in the cytoplasm. In terms of biological role, together with the chaperonin GroEL, plays an essential role in assisting protein folding. The GroEL-GroES system forms a nano-cage that allows encapsulation of the non-native substrate proteins and provides a physical environment optimized to promote and accelerate protein folding. GroES binds to the apical surface of the GroEL ring, thereby capping the opening of the GroEL channel. This Fusobacterium nucleatum subsp. polymorphum (Fusobacterium polymorphum) protein is Co-chaperonin GroES.